A 135-amino-acid polypeptide reads, in one-letter code: Protein NrdI (135 aa).

It belongs to the NrdI family.

Its function is as follows. Probably involved in ribonucleotide reductase function. In Pectobacterium atrosepticum (strain SCRI 1043 / ATCC BAA-672) (Erwinia carotovora subsp. atroseptica), this protein is Protein NrdI.